The chain runs to 178 residues: Caveolin-1 (178 aa).

Position 2 is an N-acetylserine (Ser-2). Ser-2 carries the phosphoserine modification. A required for homooligomerization region spans residues 2 to 94 (SGGKYVDSEG…WKASFTTFTV (93 aa)). The Cytoplasmic portion of the chain corresponds to 2–104 (SGGKYVDSEG…TKYWFYRLLS (103 aa)). Lys-5 carries the N6-acetyllysine; alternate modification. Residue Lys-5 forms a Glycyl lysine isopeptide (Lys-Gly) (interchain with G-Cter in ubiquitin); alternate linkage. A Phosphotyrosine modification is found at Tyr-6. Ser-9 is subject to Phosphoserine. Residue Tyr-14 is modified to Phosphotyrosine; by ABL1. Phosphotyrosine is present on Tyr-25. Glycyl lysine isopeptide (Lys-Gly) (interchain with G-Cter in ubiquitin) cross-links involve residues Lys-26, Lys-30, Lys-39, Lys-47, and Lys-57. The interaction with CAVIN3 stretch occupies residues 82–94 (DGIWKASFTTFTV). Positions 105–125 (ALFGIPMALIWGIYFAILSFL) form an intramembrane region, helical. Topologically, residues 126 to 178 (HIWAVVPCIKSFLIEIQCISRVYSIYVHTFCDPLFEAIGKIFSNIRINMQKEI) are cytoplasmic. The segment at 131–142 (VPCIKSFLIEIQ) is interacts with SPRY1, SPRY2, SPRY3 and SPRY4. 3 S-palmitoyl cysteine lipidation sites follow: Cys-133, Cys-143, and Cys-156. Residues 149 to 160 (SIYVHTFCDPLF) form an interacts with SPRY1, SPRY2, and SPRY4 region. The interacts with SPRY1, SPRY2, SPRY3 and SPRY4 stretch occupies residues 167–178 (FSNIRINMQKEI).

This sequence belongs to the caveolin family. As to quaternary structure, homooligomer. Interacts with GLIPR2. Interacts with NOSTRIN. Interacts with SNAP25 and STX1A. Interacts (via the N-terminus) with DPP4; the interaction is direct. Interacts with CTNNB1, CDH1 and JUP. Interacts with PACSIN2; this interaction induces membrane tubulation. Interacts with SLC7A9. Interacts with BMX and BTK. Interacts with TGFBR1. Interacts with CAVIN3 (via leucine-zipper domain) in a cholesterol-sensitive manner. Interacts with CAVIN1. Interacts with EHD2 in a cholesterol-dependent manner. Forms a ternary complex with UBXN6 and VCP; mediates CAV1 targeting to lysosomes for degradation. Interacts with ABCG1; this interaction regulates ABCG1-mediated cholesterol efflux. Interacts with NEU3; this interaction enhances NEU3 sialidase activity within caveola. Interacts (via C-terminus) with SPRY1, SPRY2 (via C-terminus), SPRY3, and SPRY4. Interacts with IGFBP5; this interaction allows trafficking of IGFBP5 from the plasma membrane to the nucleus. In terms of processing, phosphorylated at Tyr-14 by ABL1 in response to oxidative stress. Ubiquitinated. Undergo monoubiquitination and multi- and/or polyubiquitination. Monoubiquitination of N-terminal lysines promotes integration in a ternary complex with UBXN6 and VCP which promotes oligomeric CAV1 targeting to lysosomes for degradation. Ubiquitinated by ZNRF1; leading to degradation and modulation of the TLR4-mediated immune response.

It localises to the golgi apparatus membrane. The protein localises to the cell membrane. It is found in the membrane. The protein resides in the caveola. Its subcellular location is the membrane raft. In terms of biological role, may act as a scaffolding protein within caveolar membranes. Forms a stable heterooligomeric complex with CAV2 that targets to lipid rafts and drives caveolae formation. Mediates the recruitment of CAVIN proteins (CAVIN1/2/3/4) to the caveolae. Interacts directly with G-protein alpha subunits and can functionally regulate their activity. Involved in the costimulatory signal essential for T-cell receptor (TCR)-mediated T-cell activation. Its binding to DPP4 induces T-cell proliferation and NF-kappa-B activation in a T-cell receptor/CD3-dependent manner. Recruits CTNNB1 to caveolar membranes and may regulate CTNNB1-mediated signaling through the Wnt pathway. Negatively regulates TGFB1-mediated activation of SMAD2/3 by mediating the internalization of TGFBR1 from membrane rafts leading to its subsequent degradation. Binds 20(S)-hydroxycholesterol (20(S)-OHC). This chain is Caveolin-1 (CAV1), found in Muntiacus reevesi (Reeves' muntjac).